The sequence spans 523 residues: MKIGAPREIFEGEARVAMTPDSALQLQKLGHHCVIETGAGMKAGFSDEAYAAAGVEVLPSAAALFEAADIVVKVRGPERAEAERLRRGQTLISFFWPAQNAELLELCKEKGATVVAMDMVPRISRAQKMDALSSMANIAGYRAVIEAGNNFGRFFTGQVTAAGKVPPAKVLVVGAGVAGLAAIGTATSLGAITYAFDVRPEVAEQIESMGAEFVYLEFEEAQDGAATGGYAAPSSPEFREKQLAKFRELAPEMDIVITTALIPGRPAPKLWTEDMVSAMKRGSVIVDLASERGGNCDLTVPDQKIVTPNGVTIVGYTDFPSRMAAQASTLYSTNIRHMLTDLTPKKDGVIHHNMEDDVIRGATVTHDGAITFPPPPPKVAAIAAAKPREKVKELTPEEKRAAEIATFRKQTVSQVAMLAVGTALLLFVGMYAPPSFMAHFIVFALACFVGFQVIWNVSHSLHTPLMAVTNAISGIVILGALLQIGSGNVLVVLLAAISVLIATINIVGGFLVTRRMLAMFQKS.

The Cytoplasmic segment spans residues 1–411; sequence MKIGAPREIF…AEIATFRKQT (411 aa). NAD(+) contacts are provided by residues 127–130, Val177, 197–199, and Gly229; these read QKMD and DVR. The next 2 membrane-spanning stretches (helical) occupy residues 412–432 and 433–455; these read VSQVAMLAVGTALLLFVGMYA and PPSFMAHFIVFALACFVGFQVIW. Residues 456 to 464 lie on the Cytoplasmic side of the membrane; that stretch reads NVSHSLHTP. Residues 465-485 form a helical membrane-spanning segment; the sequence is LMAVTNAISGIVILGALLQIG. At 486–489 the chain is on the periplasmic side; it reads SGNV. The chain crosses the membrane as a helical span at residues 490–510; that stretch reads LVVLLAAISVLIATINIVGGF. Topologically, residues 511 to 523 are cytoplasmic; it reads LVTRRMLAMFQKS.

It belongs to the AlaDH/PNT family. As to quaternary structure, heterodimer of an alpha (PntA) and a beta (PntB) chain.

The protein localises to the cell inner membrane. It catalyses the reaction NAD(+) + NADPH + H(+)(in) = NADH + NADP(+) + H(+)(out). The transhydrogenation between NADH and NADP is coupled to respiration and ATP hydrolysis and functions as a proton pump across the membrane. The chain is NAD(P) transhydrogenase subunit alpha from Cereibacter sphaeroides (Rhodobacter sphaeroides).